We begin with the raw amino-acid sequence, 294 residues long: 4-hydroxy-tetrahydrodipicolinate synthase (294 aa).

T47 lines the pyruvate pocket. The active-site Proton donor/acceptor is the Y135. Catalysis depends on K163, which acts as the Schiff-base intermediate with substrate. Position 206 (I206) interacts with pyruvate.

This sequence belongs to the DapA family. As to quaternary structure, homodimer.

Its subcellular location is the cytoplasm. It carries out the reaction L-aspartate 4-semialdehyde + pyruvate = (2S,4S)-4-hydroxy-2,3,4,5-tetrahydrodipicolinate + H2O + H(+). Its pathway is amino-acid biosynthesis; L-lysine biosynthesis via DAP pathway; (S)-tetrahydrodipicolinate from L-aspartate: step 3/4. Its function is as follows. Catalyzes the condensation of (S)-aspartate-beta-semialdehyde [(S)-ASA] and pyruvate to 4-hydroxy-tetrahydrodipicolinate (HTPA). The sequence is that of 4-hydroxy-tetrahydrodipicolinate synthase from Staphylococcus haemolyticus (strain JCSC1435).